Consider the following 377-residue polypeptide: GTP 3',8-cyclase (377 aa).

Residues 1-29 form a disordered region; that stretch reads MTTRLYLSPTPPRNDREGASKSTSASIKH. The region spanning 45–271 is the Radical SAM core domain; the sequence is RFGRIARDLR…FTLSPAKEPR (227 aa). R54 contributes to the GTP binding site. The [4Fe-4S] cluster site is built by C61 and C65. Y67 is an S-adenosyl-L-methionine binding site. C68 contributes to the [4Fe-4S] cluster binding site. GTP is bound at residue R105. Residue G109 coordinates S-adenosyl-L-methionine. Position 140 (T140) interacts with GTP. Residue S164 participates in S-adenosyl-L-methionine binding. K201 serves as a coordination point for GTP. S-adenosyl-L-methionine is bound at residue M235. Residues C304 and C307 each contribute to the [4Fe-4S] cluster site. Residue 309 to 311 coordinates GTP; sequence RSR. C321 is a [4Fe-4S] cluster binding site.

It belongs to the radical SAM superfamily. MoaA family. As to quaternary structure, monomer and homodimer. [4Fe-4S] cluster is required as a cofactor.

The catalysed reaction is GTP + AH2 + S-adenosyl-L-methionine = (8S)-3',8-cyclo-7,8-dihydroguanosine 5'-triphosphate + 5'-deoxyadenosine + L-methionine + A + H(+). It functions in the pathway cofactor biosynthesis; molybdopterin biosynthesis. Catalyzes the cyclization of GTP to (8S)-3',8-cyclo-7,8-dihydroguanosine 5'-triphosphate. This is GTP 3',8-cyclase from Corynebacterium glutamicum (strain ATCC 13032 / DSM 20300 / JCM 1318 / BCRC 11384 / CCUG 27702 / LMG 3730 / NBRC 12168 / NCIMB 10025 / NRRL B-2784 / 534).